A 555-amino-acid polypeptide reads, in one-letter code: Tau-cadinol synthase (555 aa).

Positions 270, 307, 311, 448, and 451 each coordinate (2E,6E)-farnesyl diphosphate. Mg(2+) contacts are provided by Asp307 and Asp311. The DDXXD motif signature appears at 307–311 (DDTYD). Asp451, Ser455, and Glu459 together coordinate Mg(2+).

It belongs to the terpene synthase family. The cofactor is Mg(2+).

It carries out the reaction (2E,6E)-farnesyl diphosphate + H2O = tau-cadinol + diphosphate. It catalyses the reaction (2E,6E)-farnesyl diphosphate = (+)-gamma-cadinene + diphosphate. It participates in secondary metabolite biosynthesis; terpenoid biosynthesis. Its function is as follows. Sesquiterpene synthase that catalyzes the formation of sesquiterpenes and sesquiterpenoid alcohols. Converts farnesyl diphosphate (FPP) to tau-cadinol. Converts FPP to gamma-cadinene. Tau-cadinol is the major product. This chain is Tau-cadinol synthase, found in Lavandula angustifolia (Lavender).